The sequence spans 579 residues: Glypican-2 (579 aa).

The signal sequence occupies residues 1–23 (MSALRPLLLLLLPLCPGPGPGPG). Residues serine 55, serine 92, and serine 155 are each glycosylated (O-linked (Xyl...) (heparan sulfate) serine). 2 disordered regions span residues 444-468 (GGSPAEQVNNPELKVDASGPDVPTR) and 485-555 (ALGH…RSGG). O-linked (Xyl...) (heparan sulfate) serine glycans are attached at residues serine 500 and serine 502. The span at 520–529 (PARPPRPPYP) shows a compositional bias: pro residues. Glycine 554 carries the GPI-anchor amidated glycine lipid modification. Residues 555 to 579 (GASIGFHTQTILILSLSALALLGPR) constitute a propeptide, removed in mature form.

Belongs to the glypican family. In terms of assembly, interacts (via heparan sulfate) with PTN; this interaction promotes neurite outgrowth through binding of PTN with chondroitin sulfate of proteoglycans, thereby releasing PTPRS of chondroitin sulfate proteoglycans (CSPGs) and leading to binding with heparan sulfate of GPC2. Interacts (heparan sulfate chain) with MDK; this interaction is inhibited by heparin followed by chondroitin sulfate E; this interaction induces GPC2 clustering through heparan sulfate chain; this interaction induces neuronal cell adhesion and neurite outgrowth.

It localises to the cell membrane. Its subcellular location is the secreted. The protein localises to the extracellular space. Its function is as follows. Cell surface proteoglycan that bears heparan sulfate. May fulfill a function related to the motile behaviors of developing neurons. The chain is Glypican-2 (GPC2) from Homo sapiens (Human).